A 968-amino-acid polypeptide reads, in one-letter code: Phosphatidylserine decarboxylase 2 proenzyme (968 aa).

A signal peptide spans 1-25 (MAKVMRLIIFVCVALVAISVPAASS). Catalysis depends on charge relay system; for autoendoproteolytic cleavage activity residues Asp500, His570, and Ser683. Ser683 serves as the catalytic Schiff-base intermediate with substrate; via pyruvic acid; for decarboxylase activity. At Ser683 the chain carries Pyruvic acid (Ser); by autocatalysis.

Belongs to the phosphatidylserine decarboxylase family. As to quaternary structure, heterodimer of a large membrane-associated beta subunit and a small pyruvoyl-containing alpha subunit. Pyruvate is required as a cofactor. In terms of processing, is synthesized initially as an inactive proenzyme. Formation of the active enzyme involves a self-maturation process in which the active site pyruvoyl group is generated from an internal serine residue via an autocatalytic post-translational modification. Two non-identical subunits are generated from the proenzyme in this reaction, and the pyruvate is formed at the N-terminus of the alpha chain, which is derived from the carboxyl end of the proenzyme. The autoendoproteolytic cleavage occurs by a canonical serine protease mechanism, in which the side chain hydroxyl group of the serine supplies its oxygen atom to form the C-terminus of the beta chain, while the remainder of the serine residue undergoes an oxidative deamination to produce ammonia and the pyruvoyl prosthetic group on the alpha chain. During this reaction, the Ser that is part of the protease active site of the proenzyme becomes the pyruvoyl prosthetic group, which constitutes an essential element of the active site of the mature decarboxylase.

It is found in the parasitophorous vacuole. It localises to the cytoplasmic vesicle. The protein localises to the secretory vesicle. It carries out the reaction a 1,2-diacyl-sn-glycero-3-phospho-L-serine + H(+) = a 1,2-diacyl-sn-glycero-3-phosphoethanolamine + CO2. It functions in the pathway phospholipid metabolism; phosphatidylethanolamine biosynthesis; phosphatidylethanolamine from CDP-diacylglycerol: step 2/2. Functionally, catalyzes the formation of phosphatidylethanolamine (PtdEtn) from phosphatidylserine (PtdSer). Plays a central role in phospholipid metabolism and in the interorganelle trafficking of phosphatidylserine. Can act on liposomal and host cell PtdSer. The polypeptide is Phosphatidylserine decarboxylase 2 proenzyme (Toxoplasma gondii (strain ATCC 50853 / GT1)).